Here is a 1006-residue protein sequence, read N- to C-terminus: Probable sulfite reductase [NADPH] flavoprotein component (1006 aa).

One can recognise an FAD-binding FR-type domain in the interval 622 to 852 (EKVFTVHVRA…AVKTSVMKLP (231 aa)). Residues 658–669 (YDIGEALGVYGV) and 788–798 (IKRREYSISSS) contribute to the FAD site.

FAD is required as a cofactor. It depends on FMN as a cofactor.

It catalyses the reaction hydrogen sulfide + 3 NADP(+) + 3 H2O = sulfite + 3 NADPH + 4 H(+). It functions in the pathway sulfur metabolism; hydrogen sulfide biosynthesis; hydrogen sulfide from sulfite (NADPH route): step 1/1. Its function is as follows. This enzyme catalyzes the 6-electron reduction of sulfite to sulfide. This is one of several activities required for the biosynthesis of L-cysteine from sulfate. This chain is Probable sulfite reductase [NADPH] flavoprotein component, found in Schizosaccharomyces pombe (strain 972 / ATCC 24843) (Fission yeast).